The sequence spans 858 residues: Ubiquitin carboxyl-terminal hydrolase 13 (858 aa).

Position 112 is a phosphoserine (serine 112). Residues 185–293 form a UBP-type; degenerate zinc finger; it reads PVSKYANNLV…KHLAHFGIDM (109 aa). Zn(2+)-binding residues include cysteine 209, cysteine 212, cysteine 229, and histidine 242. Lysine 309 is covalently cross-linked (Glycyl lysine isopeptide (Lys-Gly) (interchain with G-Cter in SUMO2)). The USP domain maps to 334–856; that stretch reads TGLKNLGNSC…LGYMYFYRRI (523 aa). The Nucleophile role is filled by cysteine 343. A Glycyl lysine isopeptide (Lys-Gly) (interchain with G-Cter in SUMO2) cross-link involves residue lysine 403. UBA domains follow at residues 650-691 and 722-762; these read DIDE…IIVH and QPPE…IFSH. Histidine 818 serves as the catalytic Proton acceptor.

The protein belongs to the peptidase C19 family. Interacts with UFD1. Interacts (via UBA domains) with SIAH2 (when ubiquitinated). Interacts with BAG6; the interaction is direct and may mediate UBL4A deubiquitination. Interacts (via UBA 2 domain) with AMFR; the interaction is direct. Interacts with UBL4A; may be indirect via BAG6. Interacts with NEDD4.

The protein localises to the cytoplasm. It catalyses the reaction Thiol-dependent hydrolysis of ester, thioester, amide, peptide and isopeptide bonds formed by the C-terminal Gly of ubiquitin (a 76-residue protein attached to proteins as an intracellular targeting signal).. Specifically inhibited by spautin-1 (specific and potent autophagy inhibitor-1), a derivative of MBCQ that binds to USP13 and inhibits deubiquitinase activity. Regulated by PIK3C3/VPS34-containing complexes. The weak deubiquitinase activity in vitro suggests the existence of some mechanism that activates the enzyme. Functionally, deubiquitinase that mediates deubiquitination of target proteins such as BECN1, MITF, SKP2 and USP10 and is involved in various processes such as autophagy, endoplasmic reticulum-associated degradation (ERAD), cell cycle progression or DNA damage response. Component of a regulatory loop that controls autophagy and p53/TP53 levels: mediates deubiquitination of BECN1, a key regulator of autophagy, leading to stabilize the PIK3C3/VPS34-containing complexes. Alternatively, forms with NEDD4 a deubiquitination complex, which subsequently stabilizes VPS34 to promote autophagy. Also deubiquitinates USP10, an essential regulator of p53/TP53 stability. In turn, PIK3C3/VPS34-containing complexes regulate USP13 stability, suggesting the existence of a regulatory system by which PIK3C3/VPS34-containing complexes regulate p53/TP53 protein levels via USP10 and USP13. Recruited by nuclear UFD1 and mediates deubiquitination of SKP2, thereby regulating endoplasmic reticulum-associated degradation (ERAD). Also regulates ERAD through the deubiquitination of UBL4A a component of the BAG6/BAT3 complex. Mediates stabilization of SIAH2 independently of deubiquitinase activity: binds ubiquitinated SIAH2 and acts by impairing SIAH2 autoubiquitination. Regulates the cell cycle progression by stabilizing cell cycle proteins such as SKP2 and AURKB. In addition, plays an important role in maintaining genomic stability and in DNA replication checkpoint activation via regulation of RAP80 and TOPBP1. Deubiquitinates the multifunctional protein HMGB1 and subsequently drives its nucleocytoplasmic localization and its secretion. Positively regulates type I and type II interferon signalings by deubiquitinating STAT1 but negatively regulates antiviral response by deubiquitinating STING1. The chain is Ubiquitin carboxyl-terminal hydrolase 13 (Usp13) from Mus musculus (Mouse).